A 148-amino-acid polypeptide reads, in one-letter code: Urease accessory protein UreE (148 aa).

Belongs to the UreE family.

The protein localises to the cytoplasm. Its function is as follows. Involved in urease metallocenter assembly. Binds nickel. Probably functions as a nickel donor during metallocenter assembly. The polypeptide is Urease accessory protein UreE (Bacillus sp. (strain TB-90)).